Consider the following 734-residue polypeptide: Cell surface glycoprotein gp138B (734 aa).

An N-terminal signal peptide occupies residues 1-20 (MKIILTLSIFLICFLQLGQS). N-linked (GlcNAc...) asparagine glycosylation is found at N58, N89, N124, N198, N224, N392, N420, N435, N482, N498, N523, N596, N605, N614, N621, and N630. An IPT/TIG domain is found at 504–592 (PFIKSYGFLE…SSNEVTFYYF (89 aa)). A disordered region spans residues 678–712 (GETPTPSTTPSTTPSTTPSTTPSSTPTQSPGDDGS). The segment covering 680–712 (TPTPSTTPSTTPSTTPSTTPSSTPTQSPGDDGS) has biased composition (low complexity). A run of 4 repeats spans residues 683-686 (PSTT), 687-690 (PSTT), 691-694 (PSTT), and 695-698 (PSTT). A 4 X 4 AA tandem repeats of P-S-T-T region spans residues 683–698 (PSTTPSTTPSTTPSTT). G708 carries GPI-like-anchor amidated glycine lipidation. The propeptide at 709-734 (DDGSTSSTLSISFYLITLLLLTQQFI) is removed in mature form.

The sugar chains may play important roles in cell fusion. In terms of processing, the GPI-like-anchor contains a phosphoceramide group, rather than a phosphatidyl group.

Its subcellular location is the cell membrane. In terms of biological role, involved in the sexual cell fusion of D.discoideum. The polypeptide is Cell surface glycoprotein gp138B (GP138B) (Dictyostelium discoideum (Social amoeba)).